The primary structure comprises 221 residues: Redox-sensing transcriptional repressor Rex (221 aa).

The H-T-H motif DNA-binding region spans 17-56 (IYYYYLSSLHEAGIKRINSTEISEAIKFDAATVRRDFSYF). 91-96 (GTGNLG) provides a ligand contact to NAD(+).

It belongs to the transcriptional regulatory Rex family. As to quaternary structure, homodimer.

Its subcellular location is the cytoplasm. Functionally, modulates transcription in response to changes in cellular NADH/NAD(+) redox state. The sequence is that of Redox-sensing transcriptional repressor Rex from Oenococcus oeni (strain ATCC BAA-331 / PSU-1).